Here is a 215-residue protein sequence, read N- to C-terminus: Large ribosomal subunit protein uL4 (215 aa).

The interval 46–72 (TAKSKNRAEVSGGGRKPWAQKGGGRAR) is disordered. The span at 56-71 (SGGGRKPWAQKGGGRA) shows a compositional bias: gly residues.

This sequence belongs to the universal ribosomal protein uL4 family. As to quaternary structure, part of the 50S ribosomal subunit.

Functionally, one of the primary rRNA binding proteins, this protein initially binds near the 5'-end of the 23S rRNA. It is important during the early stages of 50S assembly. It makes multiple contacts with different domains of the 23S rRNA in the assembled 50S subunit and ribosome. Forms part of the polypeptide exit tunnel. This chain is Large ribosomal subunit protein uL4, found in Helicobacter pylori (strain G27).